The sequence spans 302 residues: Pathogenicity locus probable regulatory protein HrpS (302 aa).

A Sigma-54 factor interaction domain is found at 9 to 237 (DDLDAERVPN…LKAAAKRHVL (229 aa)). Residues 37–44 (GETGTGKD) and 99–108 (AQGGTLYLDE) each bind ATP. The H-T-H motif DNA-binding region spans 279 to 298 (IDAASLELDIPRRTLYRRIK).

Its function is as follows. Regulates the activation of the sigma factor HrpL which itself induces the expression of hprD as well as other hrp loci which are involved in plant pathogenicity, hrmA and avr genes. Probably interacts with sigma-54. This is Pathogenicity locus probable regulatory protein HrpS (hrpS) from Pseudomonas syringae pv. syringae.